Reading from the N-terminus, the 132-residue chain is MVMTDPIADMLTRIRNANMVRHEKLEVPASKMKREIAEILKREGFIRDVEYIEDNKQGILRIFLKYGPNNERVITGLKRISKPGLRVYVKAHEVPRVLNGLGIAILSTSQGILTDKEARQKGTGGEVIAYVW.

It belongs to the universal ribosomal protein uS8 family. As to quaternary structure, part of the 30S ribosomal subunit. Contacts proteins S5 and S12.

Its function is as follows. One of the primary rRNA binding proteins, it binds directly to 16S rRNA central domain where it helps coordinate assembly of the platform of the 30S subunit. This chain is Small ribosomal subunit protein uS8, found in Geobacillus sp. (strain WCH70).